Consider the following 277-residue polypeptide: Urease accessory protein UreD (277 aa).

This sequence belongs to the UreD family. In terms of assembly, ureD, UreF and UreG form a complex that acts as a GTP-hydrolysis-dependent molecular chaperone, activating the urease apoprotein by helping to assemble the nickel containing metallocenter of UreC. The UreE protein probably delivers the nickel.

The protein resides in the cytoplasm. In terms of biological role, required for maturation of urease via the functional incorporation of the urease nickel metallocenter. This chain is Urease accessory protein UreD, found in Yersinia pestis bv. Antiqua (strain Antiqua).